A 300-amino-acid chain; its full sequence is 2-methylisocitrate lyase (300 aa).

53–55 provides a ligand contact to substrate; that stretch reads SGD. Residues D92 and D94 each coordinate Mg(2+). Residues 129 to 130, R162, E192, 214 to 216, R245, and R274 contribute to the substrate site; these read CG and NMT.

The protein belongs to the isocitrate lyase/PEP mutase superfamily. Methylisocitrate lyase family. Requires Mg(2+) as cofactor.

The enzyme catalyses 3-hydroxybutane-1,2,3-tricarboxylate = pyruvate + succinate. In terms of biological role, involved in the methylcitric acid cycle. Catalyzes the cleavage of 2-methylisocitrate to yield pyruvate and succinate. This chain is 2-methylisocitrate lyase, found in Halalkalibacterium halodurans (strain ATCC BAA-125 / DSM 18197 / FERM 7344 / JCM 9153 / C-125) (Bacillus halodurans).